The following is an 89-amino-acid chain: Small ribosomal subunit protein uS15 (89 aa).

This sequence belongs to the universal ribosomal protein uS15 family. Part of the 30S ribosomal subunit. Forms a bridge to the 50S subunit in the 70S ribosome, contacting the 23S rRNA.

In terms of biological role, one of the primary rRNA binding proteins, it binds directly to 16S rRNA where it helps nucleate assembly of the platform of the 30S subunit by binding and bridging several RNA helices of the 16S rRNA. Its function is as follows. Forms an intersubunit bridge (bridge B4) with the 23S rRNA of the 50S subunit in the ribosome. This is Small ribosomal subunit protein uS15 from Zymomonas mobilis subsp. mobilis (strain ATCC 31821 / ZM4 / CP4).